We begin with the raw amino-acid sequence, 214 residues long: tRNA (guanine-N(7)-)-methyltransferase (214 aa).

S-adenosyl-L-methionine is bound by residues E43, E68, D95, and D117. D117 is a catalytic residue. Residues K121, D153, and 191–194 (TEYE) each bind substrate.

Belongs to the class I-like SAM-binding methyltransferase superfamily. TrmB family.

It catalyses the reaction guanosine(46) in tRNA + S-adenosyl-L-methionine = N(7)-methylguanosine(46) in tRNA + S-adenosyl-L-homocysteine. The protein operates within tRNA modification; N(7)-methylguanine-tRNA biosynthesis. Catalyzes the formation of N(7)-methylguanine at position 46 (m7G46) in tRNA. The protein is tRNA (guanine-N(7)-)-methyltransferase of Lachnoclostridium phytofermentans (strain ATCC 700394 / DSM 18823 / ISDg) (Clostridium phytofermentans).